The sequence spans 111 residues: Holo-[acyl-carrier-protein] synthase (111 aa).

Residues Asp-8 and Glu-57 each coordinate Mg(2+).

This sequence belongs to the P-Pant transferase superfamily. AcpS family. Mg(2+) serves as cofactor.

Its subcellular location is the cytoplasm. The enzyme catalyses apo-[ACP] + CoA = holo-[ACP] + adenosine 3',5'-bisphosphate + H(+). Transfers the 4'-phosphopantetheine moiety from coenzyme A to a Ser of acyl-carrier-protein. This is Holo-[acyl-carrier-protein] synthase from Mycoplasmoides gallisepticum (strain R(low / passage 15 / clone 2)) (Mycoplasma gallisepticum).